A 1169-amino-acid chain; its full sequence is ATP-dependent helicase/deoxyribonuclease subunit B (1169 aa).

Residues 1 to 285 (MEIQFLAGRS…TIFERNHRHL (285 aa)) form the UvrD-like helicase ATP-binding domain. 8 to 15 (GRSGSGKT) serves as a coordination point for ATP. Positions 280–586 (RNHRHLYTPD…KFALIPPSLD (307 aa)) constitute a UvrD-like helicase C-terminal domain. Residues C801, C1121, C1124, and C1130 each contribute to the [4Fe-4S] cluster site.

This sequence belongs to the helicase family. AddB/RexB type 1 subfamily. Heterodimer of AddA and AddB. It depends on Mg(2+) as a cofactor. [4Fe-4S] cluster serves as cofactor.

The heterodimer acts as both an ATP-dependent DNA helicase and an ATP-dependent, dual-direction single-stranded exonuclease. Recognizes the chi site generating a DNA molecule suitable for the initiation of homologous recombination. The AddB subunit has 5' -&gt; 3' nuclease activity but not helicase activity. This is ATP-dependent helicase/deoxyribonuclease subunit B from Bacillus pumilus (strain SAFR-032).